The primary structure comprises 152 residues: Putative aryl-alcohol dehydrogenase YFL057C (152 aa).

Belongs to the aldo/keto reductase family. Aldo/keto reductase 2 subfamily.

Functionally, putative aryl-alcohol dehydrogenase. This chain is Putative aryl-alcohol dehydrogenase YFL057C, found in Saccharomyces cerevisiae (strain ATCC 204508 / S288c) (Baker's yeast).